The chain runs to 367 residues: Chorismate synthase (367 aa).

NADP(+) is bound at residue arginine 48. FMN is bound by residues 125–127 (RSS), glycine 284, 299–303 (KPTPS), and arginine 325.

Belongs to the chorismate synthase family. Homotetramer. FMNH2 serves as cofactor.

The enzyme catalyses 5-O-(1-carboxyvinyl)-3-phosphoshikimate = chorismate + phosphate. Its pathway is metabolic intermediate biosynthesis; chorismate biosynthesis; chorismate from D-erythrose 4-phosphate and phosphoenolpyruvate: step 7/7. Its function is as follows. Catalyzes the anti-1,4-elimination of the C-3 phosphate and the C-6 proR hydrogen from 5-enolpyruvylshikimate-3-phosphate (EPSP) to yield chorismate, which is the branch point compound that serves as the starting substrate for the three terminal pathways of aromatic amino acid biosynthesis. This reaction introduces a second double bond into the aromatic ring system. The chain is Chorismate synthase from Lachnoclostridium phytofermentans (strain ATCC 700394 / DSM 18823 / ISDg) (Clostridium phytofermentans).